The following is a 1468-amino-acid chain: ABC transporter G family member 34 (1468 aa).

The segment at 33-53 is disordered; the sequence is NGAFSRSSSSSSRRMRGEEDD. In terms of domain architecture, ABC transporter 1 spans 178 to 450; the sequence is ANALGILPTR…FELMGFKCPE (273 aa). 211 to 218 provides a ligand contact to ATP; that stretch reads GPPGSGKT. In terms of domain architecture, ABC transmembrane type-2 1 spans 528-741; the sequence is ELLKANIDRE…AQNAVSVNEF (214 aa). 6 helical membrane-spanning segments follow: residues 546–566, 575–595, 634–654, 666–686, 690–710, and 778–798; these read FVYI…MTVF, SVAD…MIML, SPMS…VIGF, LLML…GGAA, IVAN…GGFI, and IGFG…TLAL. Residues 871-1123 enclose the ABC transporter 2 domain; that stretch reads LTFEDIKYSV…ELIKYFEGIQ (253 aa). Residue 916–923 coordinates ATP; that stretch reads GVSGAGKT. Positions 1196–1410 constitute an ABC transmembrane type-2 2 domain; sequence IQCLACLWKQ…TLYGLIVSQY (215 aa). 7 helical membrane-spanning segments follow: residues 1217–1237, 1247–1267, 1303–1323, 1330–1350, 1360–1380, 1387–1407, and 1440–1460; these read AIRL…FWDL, LFNA…LNGQ, FPYT…MIGF, FFWY…YGMM, VASI…GFVI, VWWR…GLIV, and FVAV…GFAI.

The protein belongs to the ABC transporter superfamily. ABCG family. PDR (TC 3.A.1.205) subfamily.

It is found in the membrane. Its function is as follows. May be a general defense protein. The chain is ABC transporter G family member 34 from Oryza sativa subsp. japonica (Rice).